The sequence spans 398 residues: uncharacterized protein (398 aa).

The CobW C-terminal domain maps to 235–351 (VAIVEFSARR…DIVNALNAAL (117 aa)).

This is an uncharacterized protein from Mycobacterium bovis (strain ATCC BAA-935 / AF2122/97).